The following is a 218-amino-acid chain: N-(5'-phosphoribosyl)anthranilate isomerase (218 aa).

This sequence belongs to the TrpF family.

The catalysed reaction is N-(5-phospho-beta-D-ribosyl)anthranilate = 1-(2-carboxyphenylamino)-1-deoxy-D-ribulose 5-phosphate. The protein operates within amino-acid biosynthesis; L-tryptophan biosynthesis; L-tryptophan from chorismate: step 3/5. The protein is N-(5'-phosphoribosyl)anthranilate isomerase of Acetivibrio thermocellus (strain ATCC 27405 / DSM 1237 / JCM 9322 / NBRC 103400 / NCIMB 10682 / NRRL B-4536 / VPI 7372) (Clostridium thermocellum).